We begin with the raw amino-acid sequence, 209 residues long: Uracil phosphoribosyltransferase (209 aa).

5-phospho-alpha-D-ribose 1-diphosphate contacts are provided by residues R79, R104, and 131 to 139 (DPMLATGGS). Uracil-binding positions include I194 and 199-201 (GDA). D200 serves as a coordination point for 5-phospho-alpha-D-ribose 1-diphosphate.

It belongs to the UPRTase family. Mg(2+) is required as a cofactor.

The catalysed reaction is UMP + diphosphate = 5-phospho-alpha-D-ribose 1-diphosphate + uracil. It participates in pyrimidine metabolism; UMP biosynthesis via salvage pathway; UMP from uracil: step 1/1. Allosterically activated by GTP. In terms of biological role, catalyzes the conversion of uracil and 5-phospho-alpha-D-ribose 1-diphosphate (PRPP) to UMP and diphosphate. The chain is Uracil phosphoribosyltransferase from Listeria monocytogenes serovar 1/2a (strain ATCC BAA-679 / EGD-e).